A 147-amino-acid polypeptide reads, in one-letter code: uncharacterized protein (147 aa).

Transmembrane regions (helical) follow at residues 4 to 26 (YLRV…FFWG) and 123 to 145 (YALC…RAYF).

It localises to the cell membrane. This is an uncharacterized protein from Treponema pallidum (strain Nichols).